Reading from the N-terminus, the 544-residue chain is Chaperonin GroEL (544 aa).

ATP contacts are provided by residues 29–32, 86–90, glycine 413, 476–478, and aspartate 492; these read TLGP, DGTTT, and NAA.

Belongs to the chaperonin (HSP60) family. As to quaternary structure, forms a cylinder of 14 subunits composed of two heptameric rings stacked back-to-back. Interacts with the co-chaperonin GroES.

It is found in the cytoplasm. The catalysed reaction is ATP + H2O + a folded polypeptide = ADP + phosphate + an unfolded polypeptide.. Its function is as follows. Together with its co-chaperonin GroES, plays an essential role in assisting protein folding. The GroEL-GroES system forms a nano-cage that allows encapsulation of the non-native substrate proteins and provides a physical environment optimized to promote and accelerate protein folding. In Bacillus licheniformis (strain ATCC 14580 / DSM 13 / JCM 2505 / CCUG 7422 / NBRC 12200 / NCIMB 9375 / NCTC 10341 / NRRL NRS-1264 / Gibson 46), this protein is Chaperonin GroEL.